Reading from the N-terminus, the 735-residue chain is Catalase-peroxidase (735 aa).

The tryptophyl-tyrosyl-methioninium (Trp-Tyr) (with M-249) cross-link spans 95-223 (WHSAGTYRTG…LAAVQMGLIY (129 aa)). Histidine 96 (proton acceptor) is an active-site residue. A cross-link (tryptophyl-tyrosyl-methioninium (Tyr-Met) (with W-95)) is located at residues 223–249 (YVNPEGPDGVPDPIKSGIDIRETFARM). Histidine 264 contributes to the heme b binding site.

This sequence belongs to the peroxidase family. Peroxidase/catalase subfamily. Homodimer or homotetramer. Heme b serves as cofactor. Formation of the three residue Trp-Tyr-Met cross-link is important for the catalase, but not the peroxidase activity of the enzyme.

The enzyme catalyses H2O2 + AH2 = A + 2 H2O. The catalysed reaction is 2 H2O2 = O2 + 2 H2O. In terms of biological role, bifunctional enzyme with both catalase and broad-spectrum peroxidase activity. The polypeptide is Catalase-peroxidase (Aliarcobacter butzleri (strain RM4018) (Arcobacter butzleri)).